Reading from the N-terminus, the 149-residue chain is Transcriptional regulator MraZ (149 aa).

SpoVT-AbrB domains follow at residues lysine 7–histidine 54 and alanine 83–asparagine 126.

The protein belongs to the MraZ family. Forms oligomers.

The protein localises to the cytoplasm. It localises to the nucleoid. The sequence is that of Transcriptional regulator MraZ from Rickettsia conorii (strain ATCC VR-613 / Malish 7).